Consider the following 493-residue polypeptide: MKTSFFSLGASTVTTKNVGRITQIIGPVLDAAFLPGQMPNIYNAIIVKGQNPAGQEINVTCEVQQLLGDNRVRAVAMSATDGLTRGMEVFDTGAPLSVPVGEVTLGRIFNVLGEPVDELGPVNATITSVIHRSAPAFTQLDTKLSIFETGIKVVDLLAPYRRGGKIGLFGGAGVGKTVLIMELINNIAKAHGGVSVFGGVGERTREGNDLYMEMKESKVINEENLSESKVALVYGQMNEPPGARMRVGLTALTMAEYFRDVNKQDVLLFIDNIFRFVQAGSEVSALLGRMPSAVGYQPTLGTEMGGLQERITSTKEGSITSIQAVYVPADDLTDPAPATTFAHLDATTVLSRGLAAKGIYPAVDPLDSTSTMLQPWIVGAEHYETAQGVKKTLQRYKELQDIIAILGLDELSEDDRLTVARARKIERFLSQPFFVAEVFTGSPGKYVSLAETIKGFQMILSGELDHLPEQAFYLVGNIDEATAKAATIQVESA.

Residue 170–177 participates in ATP binding; that stretch reads GGAGVGKT.

The protein belongs to the ATPase alpha/beta chains family. F-type ATPases have 2 components, CF(1) - the catalytic core - and CF(0) - the membrane proton channel. CF(1) has five subunits: alpha(3), beta(3), gamma(1), delta(1), epsilon(1). CF(0) has four main subunits: a(1), b(1), b'(1) and c(9-12).

Its subcellular location is the plastid. The protein localises to the chloroplast thylakoid membrane. It carries out the reaction ATP + H2O + 4 H(+)(in) = ADP + phosphate + 5 H(+)(out). Its function is as follows. Produces ATP from ADP in the presence of a proton gradient across the membrane. The catalytic sites are hosted primarily by the beta subunits. The protein is ATP synthase subunit beta, chloroplastic of Staurastrum punctulatum (Green alga).